A 92-amino-acid polypeptide reads, in one-letter code: Large ribosomal subunit protein bL27 (92 aa).

The tract at residues 1–21 (MSKKKGVGSSRNGRDSESKRL) is disordered. Over residues 12 to 21 (NGRDSESKRL) the composition is skewed to basic and acidic residues.

This sequence belongs to the bacterial ribosomal protein bL27 family.

This is Large ribosomal subunit protein bL27 from Halothermothrix orenii (strain H 168 / OCM 544 / DSM 9562).